The following is a 353-amino-acid chain: Guanine nucleotide-binding protein alpha-1 subunit (353 aa).

A disordered region spans residues 1–26 (MGCGMSTEEKEGKARNEEIENQLKRD). Glycine 2 carries N-myristoyl glycine lipidation. Cysteine 3 carries the S-palmitoyl cysteine lipid modification. Residues 7–26 (TEEKEGKARNEEIENQLKRD) are compositionally biased toward basic and acidic residues. In terms of domain architecture, G-alpha spans 32-353 (NEIKMLLLGA…QENLRLCGLI (322 aa)). The tract at residues 35–48 (KMLLLGAGESGKST) is G1 motif. Glutamate 43, serine 44, glycine 45, lysine 46, serine 47, threonine 48, aspartate 150, leucine 175, threonine 181, glycine 203, asparagine 269, lysine 270, aspartate 272, and alanine 325 together coordinate GTP. Serine 47 is a binding site for Mg(2+). The tract at residues 173-181 (DVLRSRVKT) is G2 motif. Threonine 181 is a Mg(2+) binding site. Residues 196–205 (YRMFDVGGQR) form a G3 motif region. Residues 265–272 (ILFLNKID) form a G4 motif region. Positions 323–328 (TCATDT) are G5 motif.

Belongs to the G-alpha family. G(q) subfamily. G proteins are composed of 3 units; alpha, beta and gamma. The alpha chain contains the guanine nucleotide binding site. Requires Mg(2+) as cofactor.

Its function is as follows. Guanine nucleotide-binding proteins (G proteins) are involved as modulators or transducers in various transmembrane signaling systems. The protein is Guanine nucleotide-binding protein alpha-1 subunit (gna-1) of Neurospora crassa (strain ATCC 24698 / 74-OR23-1A / CBS 708.71 / DSM 1257 / FGSC 987).